The sequence spans 263 residues: Thymidylate kinase (263 aa).

The N-terminal 51 residues, 1–51 (MKRICSVSSVQLFSRSFRALASPRSLNYPLQCIKRSSVRMESSNFSSGVRT), are a transit peptide targeting the mitochondrion. An ATP-binding site is contributed by 66–74 (GLDRSGKST).

This sequence belongs to the thymidylate kinase family. As to expression, expressed in root, rosette leaves, flower buds, flowers and siliques.

Its subcellular location is the mitochondrion. The protein resides in the cytoplasm. It is found in the nucleus. The protein localises to the nucleoplasm. It catalyses the reaction dTMP + ATP = dTDP + ADP. It functions in the pathway pyrimidine metabolism; dTTP biosynthesis. Catalyzes the conversion of dTMP to dTDP. Involved in the regulation of DNA replication. Is essential to promote the first division of the zygote. This Arabidopsis thaliana (Mouse-ear cress) protein is Thymidylate kinase.